Reading from the N-terminus, the 479-residue chain is Sulfate adenylyltransferase subunit 1 (479 aa).

The region spanning 25–239 (KSLLRFLTCG…EVLETVDIQR (215 aa)) is the tr-type G domain. The tract at residues 34 to 41 (GSVDDGKS) is G1. 34–41 (GSVDDGKS) is a GTP binding site. The interval 92-96 (GITID) is G2. The G3 stretch occupies residues 113–116 (DTPG). Residues 113–117 (DTPGH) and 168–171 (NKMD) contribute to the GTP site. The interval 168 to 171 (NKMD) is G4. The segment at 206–208 (SAL) is G5.

The protein belongs to the TRAFAC class translation factor GTPase superfamily. Classic translation factor GTPase family. CysN/NodQ subfamily. Heterodimer composed of CysD, the smaller subunit, and CysN.

It carries out the reaction sulfate + ATP + H(+) = adenosine 5'-phosphosulfate + diphosphate. Its pathway is sulfur metabolism; hydrogen sulfide biosynthesis; sulfite from sulfate: step 1/3. In terms of biological role, with CysD forms the ATP sulfurylase (ATPS) that catalyzes the adenylation of sulfate producing adenosine 5'-phosphosulfate (APS) and diphosphate, the first enzymatic step in sulfur assimilation pathway. APS synthesis involves the formation of a high-energy phosphoric-sulfuric acid anhydride bond driven by GTP hydrolysis by CysN coupled to ATP hydrolysis by CysD. The protein is Sulfate adenylyltransferase subunit 1 of Salmonella heidelberg (strain SL476).